The chain runs to 90 residues: QKFCTLDIAPVCCQIVIGGGMYTAGNACMCEGFVSGVGRCENPKECPCTREAQIPSCCSSRWGLVSVTGKCACDCLGGTVAFPEPCPSPY.

Gln1 bears the Pyrrolidone carboxylic acid mark. Cys46 and Cys71 are oxidised to a cystine.

The N-terminus is blocked. Post-translationally, contains seven disulfide bonds. In terms of processing, proteolytically cleaved. Major mature form may consist of cleaved, disulfide-bonded N-terminal and C-terminal chains.

Its function is as follows. Lectin with specificity for complex N-linked glycans and O-linked glycans. Has hemagglutinating activity towards rabbit erythrocytes. In Hypnea musciformis (Red alga), this protein is Lectin-1.